We begin with the raw amino-acid sequence, 161 residues long: Crossover junction endodeoxyribonuclease RuvC (161 aa).

Catalysis depends on residues aspartate 7, glutamate 67, and aspartate 139. 3 residues coordinate Mg(2+): aspartate 7, glutamate 67, and aspartate 139.

This sequence belongs to the RuvC family. In terms of assembly, homodimer which binds Holliday junction (HJ) DNA. The HJ becomes 2-fold symmetrical on binding to RuvC with unstacked arms; it has a different conformation from HJ DNA in complex with RuvA. In the full resolvosome a probable DNA-RuvA(4)-RuvB(12)-RuvC(2) complex forms which resolves the HJ. It depends on Mg(2+) as a cofactor.

It is found in the cytoplasm. The enzyme catalyses Endonucleolytic cleavage at a junction such as a reciprocal single-stranded crossover between two homologous DNA duplexes (Holliday junction).. In terms of biological role, the RuvA-RuvB-RuvC complex processes Holliday junction (HJ) DNA during genetic recombination and DNA repair. Endonuclease that resolves HJ intermediates. Cleaves cruciform DNA by making single-stranded nicks across the HJ at symmetrical positions within the homologous arms, yielding a 5'-phosphate and a 3'-hydroxyl group; requires a central core of homology in the junction. The consensus cleavage sequence is 5'-(A/T)TT(C/G)-3'. Cleavage occurs on the 3'-side of the TT dinucleotide at the point of strand exchange. HJ branch migration catalyzed by RuvA-RuvB allows RuvC to scan DNA until it finds its consensus sequence, where it cleaves and resolves the cruciform DNA. The protein is Crossover junction endodeoxyribonuclease RuvC of Syntrophotalea carbinolica (strain DSM 2380 / NBRC 103641 / GraBd1) (Pelobacter carbinolicus).